Reading from the N-terminus, the 1327-residue chain is Kinectin (1327 aa).

The Cytoplasmic portion of the chain corresponds to 1–8; sequence MELYESTY. A helical; Signal-anchor for type II membrane protein membrane pass occupies residues 9 to 29; it reads FIVLIPSVVITVIFLFFWLFM. The Lumenal portion of the chain corresponds to 30–1327; the sequence is KETLYDEVLA…EVNQQLTKET (1298 aa). Disordered regions lie at residues 49–181 and 197–216; these read STKT…EQDK and LSHQ…GLSK. An N-linked (GlcNAc...) asparagine glycan is attached at Asn-69. Basic and acidic residues-rich tracts occupy residues 73 to 86 and 111 to 135; these read RESD…DFKL and VRER…ESDA. Phosphoserine is present on residues Ser-75 and Ser-77. The segment covering 163-173 has biased composition (basic residues); sequence LKKKAGQKKSK. The stretch at 329-1327 forms a coiled coil; the sequence is ELSGLLHQLQ…EVNQQLTKET (999 aa). Asn-1031 is a glycosylation site (N-linked (GlcNAc...) asparagine). Ser-1060 carries the post-translational modification Phosphoserine. N-linked (GlcNAc...) asparagine glycosylation occurs at Asn-1066. A Phosphoserine modification is found at Ser-1290.

Belongs to the kinectin family. As to expression, expressed in all tissues examined including 12-day embryo, adult heart, brain, ovary, kidney, lung, small intestine, spleen, thymus and pancreas.

The protein localises to the endoplasmic reticulum membrane. Its function is as follows. Receptor for kinesin thus involved in kinesin-driven vesicle motility. Accumulates in integrin-based adhesion complexes (IAC) upon integrin aggregation by fibronectin. The protein is Kinectin of Mus musculus (Mouse).